Consider the following 267-residue polypeptide: NAD kinase 2 (267 aa).

Asp52 (proton acceptor) is an active-site residue. Residues 52 to 53 (DA), 124 to 125 (NE), Arg151, Asp153, 164 to 169 (TAYNKS), and Ala188 contribute to the NAD(+) site.

Belongs to the NAD kinase family. A divalent metal cation is required as a cofactor.

It localises to the cytoplasm. The catalysed reaction is NAD(+) + ATP = ADP + NADP(+) + H(+). Functionally, involved in the regulation of the intracellular balance of NAD and NADP, and is a key enzyme in the biosynthesis of NADP. Catalyzes specifically the phosphorylation on 2'-hydroxyl of the adenosine moiety of NAD to yield NADP. This Bacillus anthracis protein is NAD kinase 2.